We begin with the raw amino-acid sequence, 307 residues long: uncharacterized protein (307 aa).

Composition is skewed to basic and acidic residues over residues 42 to 52 (TCRSPGEDKCP) and 112 to 121 (QKKEEPEGSH). The segment at 42-153 (TCRSPGEDKC…VPPAVASASA (112 aa)) is disordered. Positions 129-139 (KQHKKAKKRKS) are enriched in basic residues.

This is an uncharacterized protein from Mus musculus (Mouse).